We begin with the raw amino-acid sequence, 76 residues long: Small ribosomal subunit protein bS18 (76 aa).

It belongs to the bacterial ribosomal protein bS18 family. Part of the 30S ribosomal subunit. Forms a tight heterodimer with protein bS6.

Binds as a heterodimer with protein bS6 to the central domain of the 16S rRNA, where it helps stabilize the platform of the 30S subunit. The sequence is that of Small ribosomal subunit protein bS18 from Xylella fastidiosa (strain M23).